We begin with the raw amino-acid sequence, 186 residues long: MSKSLQKPTILNVETVARSRLFTVESVDLEFSNGVRRVYERMRPTNREAVMIVPIVDDHLILIREYAVGTESYELGFSKGLIDPGESVYEAANRELKEEVGFGANDLTFLKKLSMAPSYFSSKMNIVVAQDLYPESLEGDEPEPLPQVRWPLAHMMDLLEDPDFNEARNVSALFLVREWLKGQGRV.

Glu-40 contacts substrate. Residues Thr-45–Ala-172 enclose the Nudix hydrolase domain. Residues Gly-80–Gly-101 carry the Nudix box motif. The a divalent metal cation site is built by Glu-95 and Glu-99. Ser-118 is a binding site for substrate.

The protein belongs to the Nudix hydrolase family. As to quaternary structure, homodimer. Requires Mg(2+) as cofactor.

The catalysed reaction is ADP-D-ribose + H2O = D-ribose 5-phosphate + AMP + 2 H(+). Functionally, active on adenosine(5')triphospho(5')adenosine (Ap3A), ADP-ribose, NADH, adenosine(5')diphospho(5')adenosine (Ap2A). The sequence is that of ADP compounds hydrolase NudE (nudE) from Escherichia coli (strain K12).